Consider the following 122-residue polypeptide: UPF0102 protein BARBAKC583_1042 (122 aa).

This sequence belongs to the UPF0102 family.

The protein is UPF0102 protein BARBAKC583_1042 of Bartonella bacilliformis (strain ATCC 35685 / KC583 / Herrer 020/F12,63).